We begin with the raw amino-acid sequence, 122 residues long: MARETDCDLDKKTSLTSDAEMRPEPPALCVNPGNPVFSCMLDPKTLHTATSLSKAQMIMYKTSASQYGAFSPRPFFFPCKFLPQEQAFTEHLKTTGFYQNNSLNVGPDRTRTIDSPNYQHTL.

The span at 1–23 (MARETDCDLDKKTSLTSDAEMRP) shows a compositional bias: basic and acidic residues. 2 disordered regions span residues 1-26 (MARE…PEPP) and 99-122 (QNNS…QHTL). The span at 113–122 (IDSPNYQHTL) shows a compositional bias: polar residues.

It belongs to the PIERCE2 family. Microtubule inner protein component of sperm flagellar doublet microtubules. Interacts with CFAP53, ODAD1 and ODAD3; the interactions link the outer dynein arms docking complex (ODA-DC) to the internal microtubule inner proteins (MIP) in cilium axoneme.

Its subcellular location is the cytoplasm. It is found in the cytoskeleton. The protein localises to the cilium axoneme. It localises to the flagellum axoneme. Its function is as follows. Microtubule inner protein involved in the attachment of outer dynein arms (ODAs) to dynein-decorated doublet microtubules (DMTs) in cilia axoneme, which is required for motile cilia beating. The polypeptide is Piercer of microtubule wall 2 protein (Mus musculus (Mouse)).